Reading from the N-terminus, the 232-residue chain is Ribosomal RNA small subunit methyltransferase G (232 aa).

Residues Gly-93, Leu-98, 144 to 145, and Arg-163 contribute to the S-adenosyl-L-methionine site; that span reads VE.

It belongs to the methyltransferase superfamily. RNA methyltransferase RsmG family.

It localises to the cytoplasm. The enzyme catalyses guanosine(527) in 16S rRNA + S-adenosyl-L-methionine = N(7)-methylguanosine(527) in 16S rRNA + S-adenosyl-L-homocysteine. In terms of biological role, specifically methylates the N7 position of guanine in position 527 of 16S rRNA. This Burkholderia pseudomallei (strain 668) protein is Ribosomal RNA small subunit methyltransferase G.